The primary structure comprises 175 residues: Gamma-crystallin M1 (175 aa).

Beta/gamma crystallin 'Greek key' domains are found at residues 2–40 (GKII…RVES), 41–86 (GCFM…RYPY), 89–121 (FRMR…RMSD), and 130–172 (GHWL…RRIT).

The protein belongs to the beta/gamma-crystallin family. In terms of assembly, monomer.

Functionally, crystallins are the dominant structural components of the vertebrate eye lens. This Chiloscyllium indicum (Slender bamboo shark) protein is Gamma-crystallin M1 (GM1).